The sequence spans 571 residues: Proline--tRNA ligase (571 aa).

It belongs to the class-II aminoacyl-tRNA synthetase family. ProS type 1 subfamily. In terms of assembly, homodimer.

The protein localises to the cytoplasm. It carries out the reaction tRNA(Pro) + L-proline + ATP = L-prolyl-tRNA(Pro) + AMP + diphosphate. Functionally, catalyzes the attachment of proline to tRNA(Pro) in a two-step reaction: proline is first activated by ATP to form Pro-AMP and then transferred to the acceptor end of tRNA(Pro). As ProRS can inadvertently accommodate and process non-cognate amino acids such as alanine and cysteine, to avoid such errors it has two additional distinct editing activities against alanine. One activity is designated as 'pretransfer' editing and involves the tRNA(Pro)-independent hydrolysis of activated Ala-AMP. The other activity is designated 'posttransfer' editing and involves deacylation of mischarged Ala-tRNA(Pro). The misacylated Cys-tRNA(Pro) is not edited by ProRS. The polypeptide is Proline--tRNA ligase (Pseudomonas putida (strain ATCC 700007 / DSM 6899 / JCM 31910 / BCRC 17059 / LMG 24140 / F1)).